We begin with the raw amino-acid sequence, 861 residues long: MRVKEIRKNYQHLWRWGIMLRWGTMLLGMLMICSAAEQLWVTVYYGVPVWKEATTTLFCASDAKAYDTEAHNVWATHACVPTDPNPQEVVLVNVTENFNMWKNNMVEQMHENIISLWDQSLKPCVKLTPLCVTLHCTDLRNTTNNNSSIEEKMKGEIKNCSFNVTTNIRDKVQKEYALFYKLDVVPIDNDNNSTNTCYRLISCDTSVITQACPKVSFEPIPIHYCTPAGFALLKCNNKTFNGTGPCKNVSTVQCTHGIRPVVSTQLLLNGSLAEEGVVIRSENFTDNVKTIIVQLNETVKINCIRPNNKTRKRVTMGPGRVYYTTGEIIGDIRQAHCNISRAEWNKTLEQIANKLRKQFENKTIVFNQSSGGDPEIVMHNFNCGGEFFYCDSSQLFNSTHLSNGTWWNGTGPENITLPCRIKQIVNMWQEVGKAMYAPPIRGQIRCSSNITGLLLTRDGGNTQNNNTNSSIEIFRPGGGDMRDNWRSELYKYKVVKIEPLGVAPTRAKRRVVQREKRAVGIGAVFLGFLGAAGSTMGAAAVTLTVQARQLLPGIVQQQNNLLRAIDAQQHLLQLTVWGIKQLQARVLAVERYLKDQQLMGIWGCSGKFICTTAVPWNTSWSNKSFNEIWDNMTWMEWEREINNYTNLIYNLIEESQNQQEKNEQDLLALDKWDSLWNWFSITKWLWYIKIFIMIVGGLVGLRIVFTVLSIVNRVRQGYSPLSFQTRLPARGPDRPEGIEEEGGERDRDRSGPLVDGLLALIWVDLRSLCLFSYHRLRDLLLIVTRTVELLGRKGWEVLKYLWNLLQYWSQELKNSAVSLLNATAIAVAEGTDRVIEILQRTYRAILHIPVKIRQGLERALL.

An N-terminal signal peptide occupies residues 1–37 (MRVKEIRKNYQHLWRWGIMLRWGTMLLGMLMICSAAE). Topologically, residues 38–690 (QLWVTVYYGV…ITKWLWYIKI (653 aa)) are extracellular. Residues cysteine 59 and cysteine 79 are joined by a disulfide bond. 19 N-linked (GlcNAc...) asparagine; by host glycosylation sites follow: asparagine 93, asparagine 141, asparagine 145, asparagine 146, asparagine 159, asparagine 163, asparagine 191, asparagine 192, asparagine 237, asparagine 241, asparagine 248, asparagine 269, asparagine 283, asparagine 296, asparagine 308, asparagine 338, asparagine 345, asparagine 361, and asparagine 367. 5 disulfides stabilise this stretch: cysteine 124-cysteine 212, cysteine 131-cysteine 203, cysteine 136-cysteine 160, cysteine 225-cysteine 254, and cysteine 235-cysteine 246. A V1 region spans residues 136 to 159 (CTDLRNTTNNNSSIEEKMKGEIKN). The V2 stretch occupies residues 160–203 (CSFNVTTNIRDKVQKEYALFYKLDVVPIDNDNNSTNTCYRLISC). The interval 303 to 336 (CIRPNNKTRKRVTMGPGRVYYTTGEIIGDIRQAH) is V3. A disulfide bond links cysteine 303 and cysteine 337. The tract at residues 369-379 (SSGGDPEIVMH) is CD4-binding loop. 2 cysteine pairs are disulfide-bonded: cysteine 383/cysteine 446 and cysteine 390/cysteine 419. A V4 region spans residues 390 to 419 (CDSSQLFNSTHLSNGTWWNGTGPENITLPC). Residues asparagine 397, asparagine 403, asparagine 408, asparagine 414, asparagine 449, asparagine 465, and asparagine 468 are each glycosylated (N-linked (GlcNAc...) asparagine; by host). 2 V5 regions span residues 462 to 477 (TQNN…FRPG) and 464 to 477 (NNNT…FRPG). The tract at residues 518–538 (AVGIGAVFLGFLGAAGSTMGA) is fusion peptide. The immunosuppression stretch occupies residues 580–598 (KQLQARVLAVERYLKDQQL). Cysteine 604 and cysteine 610 are disulfide-bonded. N-linked (GlcNAc...) asparagine; by host glycans are attached at residues asparagine 617, asparagine 622, asparagine 631, and asparagine 643. Residues 639-673 (REINNYTNLIYNLIEESQNQQEKNEQDLLALDKWD) adopt a coiled-coil conformation. Residues 668–689 (ALDKWDSLWNWFSITKWLWYIK) form an MPER; binding to GalCer region. Residues 691–711 (FIMIVGGLVGLRIVFTVLSIV) form a helical membrane-spanning segment. The Cytoplasmic portion of the chain corresponds to 712-861 (NRVRQGYSPL…IRQGLERALL (150 aa)). Residues 718–721 (YSPL) carry the YXXL motif; contains endocytosis signal motif. Residues 725–749 (TRLPARGPDRPEGIEEEGGERDRDR) are disordered. Cysteine 769 is lipidated: S-palmitoyl cysteine; by host. Residues 860–861 (LL) carry the Di-leucine internalization motif motif.

It belongs to the HIV-1 env protein family. The mature envelope protein (Env) consists of a homotrimer of non-covalently associated gp120-gp41 heterodimers. The resulting complex protrudes from the virus surface as a spike. There seems to be as few as 10 spikes on the average virion. Interacts with host CD4, CCR5 and CXCR4. Gp120 also interacts with the C-type lectins CD209/DC-SIGN and CLEC4M/DC-SIGNR (collectively referred to as DC-SIGN(R)). Gp120 and gp41 interact with GalCer. Gp120 interacts with host ITGA4/ITGB7 complex; on CD4+ T-cells, this interaction results in rapid activation of integrin ITGAL/LFA-1, which facilitates efficient cell-to-cell spreading of HIV-1. Gp120 interacts with cell-associated heparan sulfate; this interaction increases virus infectivity on permissive cells and may be involved in infection of CD4- cells. As to quaternary structure, the mature envelope protein (Env) consists of a homotrimer of non-covalently associated gp120-gp41 heterodimers. The resulting complex protrudes from the virus surface as a spike. There seems to be as few as 10 spikes on the average virion. Highly glycosylated by host. The high number of glycan on the protein is reffered to as 'glycan shield' because it contributes to hide protein sequence from adaptive immune system. Post-translationally, palmitoylation of the transmembrane protein and of Env polyprotein (prior to its proteolytic cleavage) is essential for their association with host cell membrane lipid rafts. Palmitoylation is therefore required for envelope trafficking to classical lipid rafts, but not for viral replication. In terms of processing, specific enzymatic cleavages in vivo yield mature proteins. Envelope glycoproteins are synthesized as an inactive precursor that is heavily N-glycosylated and processed likely by host cell furin in the Golgi to yield the mature SU and TM proteins. The cleavage site between SU and TM requires the minimal sequence [KR]-X-[KR]-R. About 2 of the 9 disulfide bonds of gp41 are reduced by P4HB/PDI, following binding to CD4 receptor.

Its subcellular location is the virion membrane. It localises to the host cell membrane. The protein resides in the host endosome membrane. Its function is as follows. Oligomerizes in the host endoplasmic reticulum into predominantly trimers. In a second time, gp160 transits in the host Golgi, where glycosylation is completed. The precursor is then proteolytically cleaved in the trans-Golgi and thereby activated by cellular furin or furin-like proteases to produce gp120 and gp41. Attaches the virus to the host lymphoid cell by binding to the primary receptor CD4. This interaction induces a structural rearrangement creating a high affinity binding site for a chemokine coreceptor like CXCR4 and/or CCR5. Acts as a ligand for CD209/DC-SIGN and CLEC4M/DC-SIGNR, which are respectively found on dendritic cells (DCs), and on endothelial cells of liver sinusoids and lymph node sinuses. These interactions allow capture of viral particles at mucosal surfaces by these cells and subsequent transmission to permissive cells. HIV subverts the migration properties of dendritic cells to gain access to CD4+ T-cells in lymph nodes. Virus transmission to permissive T-cells occurs either in trans (without DCs infection, through viral capture and transmission), or in cis (following DCs productive infection, through the usual CD4-gp120 interaction), thereby inducing a robust infection. In trans infection, bound virions remain infectious over days and it is proposed that they are not degraded, but protected in non-lysosomal acidic organelles within the DCs close to the cell membrane thus contributing to the viral infectious potential during DCs' migration from the periphery to the lymphoid tissues. On arrival at lymphoid tissues, intact virions recycle back to DCs' cell surface allowing virus transmission to CD4+ T-cells. Functionally, acts as a class I viral fusion protein. Under the current model, the protein has at least 3 conformational states: pre-fusion native state, pre-hairpin intermediate state, and post-fusion hairpin state. During fusion of viral and target intracellular membranes, the coiled coil regions (heptad repeats) assume a trimer-of-hairpins structure, positioning the fusion peptide in close proximity to the C-terminal region of the ectodomain. The formation of this structure appears to drive apposition and subsequent fusion of viral and target cell membranes. Complete fusion occurs in host cell endosomes and is dynamin-dependent, however some lipid transfer might occur at the plasma membrane. The virus undergoes clathrin-dependent internalization long before endosomal fusion, thus minimizing the surface exposure of conserved viral epitopes during fusion and reducing the efficacy of inhibitors targeting these epitopes. Membranes fusion leads to delivery of the nucleocapsid into the cytoplasm. In Homo sapiens (Human), this protein is Envelope glycoprotein gp160.